The chain runs to 298 residues: GTPase Era (298 aa).

Residues 4-171 (RAGFVALIGR…KEKIVSFLPE (168 aa)) form the Era-type G domain. The tract at residues 12 to 19 (GRTNVGKS) is G1. 12 to 19 (GRTNVGKS) is a GTP binding site. A G2 region spans residues 38-42 (QTTRN). The tract at residues 59–62 (DTPG) is G3. Residues 59–63 (DTPGI) and 121–124 (NKID) each bind GTP. The G4 stretch occupies residues 121–124 (NKID). The G5 stretch occupies residues 150–152 (ISA). Residues 202-280 (LEEEVPHGVY…FLQLWVKVRK (79 aa)) enclose the KH type-2 domain.

It belongs to the TRAFAC class TrmE-Era-EngA-EngB-Septin-like GTPase superfamily. Era GTPase family. As to quaternary structure, monomer.

It is found in the cytoplasm. Its subcellular location is the cell membrane. Functionally, an essential GTPase that binds both GDP and GTP, with rapid nucleotide exchange. Plays a role in 16S rRNA processing and 30S ribosomal subunit biogenesis and possibly also in cell cycle regulation and energy metabolism. The polypeptide is GTPase Era (Caldanaerobacter subterraneus subsp. tengcongensis (strain DSM 15242 / JCM 11007 / NBRC 100824 / MB4) (Thermoanaerobacter tengcongensis)).